The chain runs to 345 residues: Protein-glutamate methylesterase/protein-glutamine glutaminase 2 (345 aa).

The Response regulatory domain maps to 1 to 116 (MVVDDSAVVR…KQFLVDASDD (116 aa)). D50 carries the 4-aspartylphosphate modification. Positions 154–345 (LQTTERVVAL…AREIMAQMAG (192 aa)) constitute a CheB-type methylesterase domain. Catalysis depends on residues S166, H192, and D288.

The protein belongs to the CheB family. In terms of processing, phosphorylated by CheA. Phosphorylation of the N-terminal regulatory domain activates the methylesterase activity.

The protein localises to the cytoplasm. It carries out the reaction [protein]-L-glutamate 5-O-methyl ester + H2O = L-glutamyl-[protein] + methanol + H(+). It catalyses the reaction L-glutaminyl-[protein] + H2O = L-glutamyl-[protein] + NH4(+). In terms of biological role, involved in chemotaxis. Part of a chemotaxis signal transduction system that modulates chemotaxis in response to various stimuli. Catalyzes the demethylation of specific methylglutamate residues introduced into the chemoreceptors (methyl-accepting chemotaxis proteins or MCP) by CheR. Also mediates the irreversible deamidation of specific glutamine residues to glutamic acid. This is Protein-glutamate methylesterase/protein-glutamine glutaminase 2 from Albidiferax ferrireducens (strain ATCC BAA-621 / DSM 15236 / T118) (Rhodoferax ferrireducens).